The sequence spans 544 residues: Major royal jelly protein 3 (544 aa).

The N-terminal stretch at 1-20 (MTKWLLLVVCLGIACQDVTS) is a signal peptide. A glycan (N-linked (GlcNAc...) asparagine) is linked at asparagine 183. A disordered region spans residues 421–544 (RYHNQNAGNQ…NQVHHSSKLH (124 aa)). 20 tandem repeats follow at residues 424-428 (NQNAG), 429-433 (NQNAD), 434-438 (NQNAD), 439-443 (NQNAN), 444-448 (NQNAD), 449-453 (NQNAN), 454-458 (KQNGN), 459-463 (RQNDN), 464-468 (RQNDN), 469-473 (KQNGN), 474-478 (RQNDN), 479-483 (KQNGN), 484-488 (RQNDN), 489-493 (KQNGN), 494-498 (RQNGN), 499-503 (KQNDN), 504-508 (KQNGN), 509-513 (RQNDN), 514-518 (KRNGN), and 519-523 (RQNDN). Low complexity-rich tracts occupy residues 424-460 (NQNA…GNRQ), 468-510 (NKQN…GNRQ), and 518-530 (NRQN…QNDN). The interval 424–523 (NQNAGNQNAD…KRNGNRQNDN (100 aa)) is 23 X 5 AA tandem repeats of [NKR]-[RQ]-N-[AGD]-[DNG]. A 21; half-length repeat occupies 524-525 (QN). Repeat copies occupy residues 526–530 (NQNDN) and 531–535 (NRNDN).

It belongs to the major royal jelly protein family. As to quaternary structure, homoligomer; in the absence of RNA, assembles into a higher-order oligomeric form, composed of around 20 monomer units. In terms of tissue distribution, found in and secreted from the hypopharyngeal glands of the worker honey bee (at protein level); expression peaks at 12 days post eclosion. Expressed in the brains of worker bees. Expressed in the brains of adult worker bees peaking at 12 days post eclosion (at protein level). Expressed in the spermatheca of adult queen bees (at protein level); Expression levels are higher in mated queens than in virgin queens. Expressed in queen bee ovaries and male drone testes. Expression in the head of forager worker bees is lower than in the heads of nurse worker bees.

Its subcellular location is the secreted. Its function is as follows. Abundant protein component of royal jelly, a substance produced in the hypopharyngeal gland containing proteins, free amino acids, fatty acids, sugars and other nutrients, which is fed to developing larvae by worker nurse bees. Major royal jelly proteins (MRJPs) are high in essential amino acids and probably have a nutritional function in larval food. All larvae are fed some royal jelly (also known as worker jelly) early in their development but it forms the principal source of nutrition for larvae destined to become queen bees. Secreted RNA-binding protein required to concentrate, stabilize and enhance environmental RNA bioavailability in the honey bee royal jelly. Acts as a RNA-aggregating protein: binds 18 nucleotides and longer single- and double-stranded RNA (ssRNA and dsRNA, respectively) in a non-specific manner. RNA-binding drives super-order assembly of oligomers into extracellular ribonucleoprotein granules that concentrate, protect and enhance RNA uptake granules, facilitating RNA transfer among bees. Produced in the spermatheca of adult queen bees, along with other major royal jelly proteins, where it may act as a nutrient supply for sperm stored by mated queens, or be involved in energy metabolism. In Apis mellifera (Honeybee), this protein is Major royal jelly protein 3.